Reading from the N-terminus, the 241-residue chain is Dephospho-CoA kinase CAB5 (241 aa).

The region spanning 3 to 211 is the DPCK domain; sequence VVGLTGGIAC…PSKLRTVLEY (209 aa). Residue 8 to 15 coordinates ATP; the sequence is GGIACGKS.

It belongs to the CoaE family.

Its subcellular location is the endoplasmic reticulum. The protein resides in the mitochondrion. It localises to the nucleus. It catalyses the reaction 3'-dephospho-CoA + ATP = ADP + CoA + H(+). The protein operates within cofactor biosynthesis; coenzyme A biosynthesis; CoA from (R)-pantothenate: step 5/5. Catalyzes the phosphorylation of the 3'-hydroxyl group of dephosphocoenzyme A to form coenzyme A. In Saccharomyces cerevisiae (strain ATCC 204508 / S288c) (Baker's yeast), this protein is Dephospho-CoA kinase CAB5 (CAB5).